We begin with the raw amino-acid sequence, 312 residues long: Prephenate dehydratase (312 aa).

In terms of domain architecture, Prephenate dehydratase spans Gly3–Arg194. The ACT domain maps to Ser208–Pro285. The disordered stretch occupies residues Gly291 to Pro312.

In terms of assembly, homodimer.

The enzyme catalyses prephenate + H(+) = 3-phenylpyruvate + CO2 + H2O. It functions in the pathway amino-acid biosynthesis; L-phenylalanine biosynthesis; phenylpyruvate from prephenate: step 1/1. In Mycolicibacterium vanbaalenii (strain DSM 7251 / JCM 13017 / BCRC 16820 / KCTC 9966 / NRRL B-24157 / PYR-1) (Mycobacterium vanbaalenii), this protein is Prephenate dehydratase (pheA).